Here is a 206-residue protein sequence, read N- to C-terminus: MDPTASGRQAPRNPRQATVQRETKETSVSVALVVDGTGTVDIDTGVPFYDHMLAQLGKHAGFDLTVVTRGDLDVDAHHTVEDTALALGQAFREALGDKAGIRRFGDALVPLDEALCQVAVDLSGRPYLVHSEPEMVELIGTYETTLTRHVWESFVAQAHICLHIQVLAGRNAHHINEVQFKAVARALRDAVRLDGVAGVPSTKGAL.

Residues 1–24 are disordered; it reads MDPTASGRQAPRNPRQATVQRETK.

Belongs to the imidazoleglycerol-phosphate dehydratase family.

It is found in the cytoplasm. The catalysed reaction is D-erythro-1-(imidazol-4-yl)glycerol 3-phosphate = 3-(imidazol-4-yl)-2-oxopropyl phosphate + H2O. It participates in amino-acid biosynthesis; L-histidine biosynthesis; L-histidine from 5-phospho-alpha-D-ribose 1-diphosphate: step 6/9. The chain is Imidazoleglycerol-phosphate dehydratase from Acidothermus cellulolyticus (strain ATCC 43068 / DSM 8971 / 11B).